The chain runs to 404 residues: Phosphopentomutase (404 aa).

The Mn(2+) site is built by Asp-10, Asp-297, His-302, Asp-338, His-339, and His-350.

It belongs to the phosphopentomutase family. Requires Mn(2+) as cofactor.

Its subcellular location is the cytoplasm. It catalyses the reaction 2-deoxy-alpha-D-ribose 1-phosphate = 2-deoxy-D-ribose 5-phosphate. The enzyme catalyses alpha-D-ribose 1-phosphate = D-ribose 5-phosphate. It functions in the pathway carbohydrate degradation; 2-deoxy-D-ribose 1-phosphate degradation; D-glyceraldehyde 3-phosphate and acetaldehyde from 2-deoxy-alpha-D-ribose 1-phosphate: step 1/2. Its function is as follows. Isomerase that catalyzes the conversion of deoxy-ribose 1-phosphate (dRib-1-P) and ribose 1-phosphate (Rib-1-P) to deoxy-ribose 5-phosphate (dRib-5-P) and ribose 5-phosphate (Rib-5-P), respectively. This Colwellia psychrerythraea (strain 34H / ATCC BAA-681) (Vibrio psychroerythus) protein is Phosphopentomutase.